The chain runs to 64 residues: Protein translocase subunit SecE (64 aa).

A helical membrane pass occupies residues 35-55 (LVVLGTVAFITVFFAVVDYGI).

This sequence belongs to the SecE/SEC61-gamma family. In terms of assembly, component of the Sec protein translocase complex. Heterotrimer consisting of SecY, SecE and SecG subunits. The heterotrimers can form oligomers, although 1 heterotrimer is thought to be able to translocate proteins. Interacts with the ribosome. Interacts with SecDF, and other proteins may be involved. Interacts with SecA.

It is found in the cell membrane. In terms of biological role, essential subunit of the Sec protein translocation channel SecYEG. Clamps together the 2 halves of SecY. May contact the channel plug during translocation. The polypeptide is Protein translocase subunit SecE (Halalkalibacterium halodurans (strain ATCC BAA-125 / DSM 18197 / FERM 7344 / JCM 9153 / C-125) (Bacillus halodurans)).